The sequence spans 2472 residues: Spectrin alpha chain, non-erythrocytic 1 (2472 aa).

Met-1 carries the post-translational modification N-acetylmethionine. Spectrin repeat units lie at residues 45 to 146, 150 to 251, 256 to 358, 361 to 465, 468 to 570, 574 to 676, 679 to 781, 785 to 888, and 891 to 969; these read RFQF…IKLL, KLVQ…QGKL, EVQR…ARLN, YRLQ…QYEQ, DLQL…AQLA, HLQQ…KLRE, QQQQ…QKLA, RLQQ…DLED, and QAQQ…ETGK. Ser-587 bears the Phosphoserine mark. The residue at position 637 (Lys-637) is an N6-acetyllysine. Lys-803 is modified (N6-acetyllysine). 6 positions are modified to phosphoserine: Ser-924, Ser-982, Ser-999, Ser-1029, Ser-1031, and Ser-1041. Residues 967–1026 form the SH3 domain; it reads TGKELVLALYDYQEKSPREVTMKKGDILTLLNSTNKDWWKVEVNDRQGFVPAAYVKKLDP. Residues 1096–1166 form a Spectrin 10 repeat; sequence LFREANELQQ…LESEGLMAEE (71 aa). Phosphotyrosine is present on Tyr-1176. Residues Ser-1190, Ser-1207, Ser-1217, Ser-1291, Ser-1306, Ser-1323, and Ser-1338 each carry the phosphoserine modification. One copy of the Spectrin 11 repeat lies at 1233-1336; the sequence is HEVQRFHRDA…RADQRKAKLG (104 aa). 2 Spectrin repeats span residues 1339-1442 and 1446-1549; these read HDLQ…MMLD and ELQL…KLGE. Residue Lys-1519 is modified to N6-acetyllysine. A phosphoserine mark is found at Ser-1550, Ser-1557, Ser-1578, Ser-1615, and Ser-1647. 7 Spectrin repeats span residues 1552–1656, 1659–1762, 1764–1868, 1871–1974, 1978–2081, 2092–2194, and 2206–2310; these read TLQQ…KLKE, KQQN…KLNE, HRLH…RLEE, EYQQ…KLDE, FLQF…KLLE, LFLT…LELQ, and LRQE…NLEQ. Thr-2020 is subject to Phosphothreonine. Position 2052 is an N6-acetyllysine (Lys-2052). 3 EF-hand domains span residues 2323–2358, 2366–2401, and 2404–2439; these read EALKEFSMMFKHFDKDKSGRLNHQEFKSCLRSLGYD, EPDPEFEAILDTVDPNRDGHVSLQEYMAFMISRETE, and KSSEEIESAFRALSSEGKPYVTKEELYQNLTREQAD. 10 residues coordinate Ca(2+): Asp-2336, Asp-2338, Ser-2340, Arg-2342, Glu-2347, Asp-2379, Asn-2381, Asp-2383, His-2385, and Glu-2390. At Lys-2421 the chain carries N6-acetyllysine.

Belongs to the spectrin family. Like erythrocyte spectrin, the spectrin-like proteins are capable of forming dimers which can further associate to tetramers. Interacts (via C-terminal spectrin repeats) with TRPC4. Interacts with CALM and EMD. Interacts with isoform 1 of ACP1. Identified in a complex with ACTN4, CASK, IQGAP1, MAGI2, NPHS1 and SPTBN1. Interacts with SHANK3 (via ANK repeats). Interacts with CLN3; this interaction regulates the fodrin localization at the plasma membrane. Post-translationally, phosphorylation of Tyr-1176 decreases sensitivity to cleavage by calpain in vitro.

It is found in the cytoplasm. It localises to the cytoskeleton. Its subcellular location is the cell cortex. Fodrin, which seems to be involved in secretion, interacts with calmodulin in a calcium-dependent manner and is thus candidate for the calcium-dependent movement of the cytoskeleton at the membrane. This is Spectrin alpha chain, non-erythrocytic 1 (SPTAN1) from Homo sapiens (Human).